Consider the following 177-residue polypeptide: Nucleoside triphosphate/diphosphate phosphatase (177 aa).

Arg23 functions as the Proton donor in the catalytic mechanism. 6 residues coordinate Mg(2+): Asn87, Asp103, Asp105, Asp107, Asp120, and Glu123.

The protein belongs to the Ntdp family. Mg(2+) is required as a cofactor.

The enzyme catalyses a ribonucleoside 5'-triphosphate + H2O = a ribonucleoside 5'-diphosphate + phosphate + H(+). It carries out the reaction a ribonucleoside 5'-diphosphate + H2O = a ribonucleoside 5'-phosphate + phosphate + H(+). In terms of biological role, has nucleoside phosphatase activity towards nucleoside triphosphates and nucleoside diphosphates. The chain is Nucleoside triphosphate/diphosphate phosphatase from Streptococcus pyogenes serotype M1.